The primary structure comprises 224 residues: UPF0758 protein VP0184 (224 aa).

The 123-residue stretch at 102-224 (ALTSPEQTKL…SVSFAERGWI (123 aa)) folds into the MPN domain. Zn(2+) is bound by residues histidine 173, histidine 175, and aspartate 186. The short motif at 173 to 186 (HNHPSGVAEPSQAD) is the JAMM motif element.

Belongs to the UPF0758 family.

This chain is UPF0758 protein VP0184, found in Vibrio parahaemolyticus serotype O3:K6 (strain RIMD 2210633).